Here is a 635-residue protein sequence, read N- to C-terminus: Threonine--tRNA ligase (635 aa).

The 58-residue stretch at 1–58 folds into the TGS domain; it reads MIHVTCNQEAFELPEGASAMDLANKMKQSHCFVGALINDQEKDLSTTLQDGDTVLFLT. Residues 237–528 are catalytic; sequence DHRVLGTKLD…LIEHFKGRFP (292 aa). Positions 328, 379, and 505 each coordinate Zn(2+).

Belongs to the class-II aminoacyl-tRNA synthetase family. Homodimer. Requires Zn(2+) as cofactor.

It localises to the cytoplasm. It catalyses the reaction tRNA(Thr) + L-threonine + ATP = L-threonyl-tRNA(Thr) + AMP + diphosphate + H(+). Its function is as follows. Catalyzes the attachment of threonine to tRNA(Thr) in a two-step reaction: L-threonine is first activated by ATP to form Thr-AMP and then transferred to the acceptor end of tRNA(Thr). Also edits incorrectly charged L-seryl-tRNA(Thr). This Chlamydia trachomatis serovar L2b (strain UCH-1/proctitis) protein is Threonine--tRNA ligase.